The chain runs to 88 residues: Small ribosomal subunit protein uS15 (88 aa).

It belongs to the universal ribosomal protein uS15 family. In terms of assembly, part of the 30S ribosomal subunit. Forms a bridge to the 50S subunit in the 70S ribosome, contacting the 23S rRNA.

In terms of biological role, one of the primary rRNA binding proteins, it binds directly to 16S rRNA where it helps nucleate assembly of the platform of the 30S subunit by binding and bridging several RNA helices of the 16S rRNA. Forms an intersubunit bridge (bridge B4) with the 23S rRNA of the 50S subunit in the ribosome. This Albidiferax ferrireducens (strain ATCC BAA-621 / DSM 15236 / T118) (Rhodoferax ferrireducens) protein is Small ribosomal subunit protein uS15.